Here is a 389-residue protein sequence, read N- to C-terminus: Na(+)/H(+) antiporter NhaA (389 aa).

11 consecutive transmembrane segments (helical) span residues 17–37, 59–79, 95–115, 124–144, 154–174, 177–197, 213–233, 261–281, 292–312, 328–348, and 363–383; these read ILLLIAVAFAMLMANSPLAGF, LLLWINDGLMALFFLLIGLEV, SLPTFAAIGGMLVPAGIYLLF, AGWAIPAATDIAFALGIMALL, VFLLALAIIDDLGVIVIIALF, SDLSTVSLIIASIAIVGLVAL, LILWVAVLKSGVHATLAGVII, FLILPVFAFANAGVALGNMSL, IALGLMLGKPIGVMLFSFVAV, IAPVAAMCGIGFTMSMFIASL, and LGTLMGSIFAALIGYFWLSKV.

This sequence belongs to the NhaA Na(+)/H(+) (TC 2.A.33) antiporter family.

It localises to the cell inner membrane. It carries out the reaction Na(+)(in) + 2 H(+)(out) = Na(+)(out) + 2 H(+)(in). Functionally, na(+)/H(+) antiporter that extrudes sodium in exchange for external protons. The chain is Na(+)/H(+) antiporter NhaA from Shewanella oneidensis (strain ATCC 700550 / JCM 31522 / CIP 106686 / LMG 19005 / NCIMB 14063 / MR-1).